Here is a 409-residue protein sequence, read N- to C-terminus: Multidrug transporter MdfA (409 aa).

Residues 1-15 are Cytoplasmic-facing; sequence MQTSFSPATRLGRRA. Residues 16 to 36 traverse the membrane as a helical segment; the sequence is LLFPLCLVLFEFAAYIANDMI. Residues 37-52 are Periplasmic-facing; sequence QPGMLAVVAEFNASVE. The helical transmembrane segment at 53-73 threads the bilayer; that stretch reads WVPTSMTAYLAGGMFLQWLLG. Topologically, residues 74–82 are cytoplasmic; sequence PLSDRRGRR. Residues 83 to 103 form a helical membrane-spanning segment; sequence PVMLAGVAFFVVTCLAILLVN. Residues 104–107 lie on the Periplasmic side of the membrane; the sequence is SIEQ. A helical transmembrane segment spans residues 108 to 128; sequence FIAMRFLQGIGLCFIGAVGYA. Topologically, residues 129–144 are cytoplasmic; the sequence is TIQESFEEAVCIKITA. A helical membrane pass occupies residues 145 to 165; that stretch reads LMANVALIAPLLGPLAGAALI. At 166–168 the chain is on the periplasmic side; the sequence is HVA. A helical transmembrane segment spans residues 169–189; it reads PWQTMFVLFAVLGAISFAGLW. The Cytoplasmic segment spans residues 190–226; that stretch reads RAMPETASLKGEKLSVANMWRDYKQVLANRRFLCGSL. The helical transmembrane segment at 227-247 threads the bilayer; sequence ALGFASLPLLAWIAQSPVILI. Residues 248-254 are Periplasmic-facing; sequence SGEQLST. Residues 255–275 traverse the membrane as a helical segment; the sequence is FEYGILQVPIFGALIIGNLTL. Over 276–286 the chain is Cytoplasmic; sequence ARLSGKTSIPQ. A helical membrane pass occupies residues 287–307; sequence LIRYGAGPMIVGLMIAAGSTL. The Periplasmic segment spans residues 308-314; that stretch reads YSSHAYL. The chain crosses the membrane as a helical span at residues 315–335; the sequence is WMTAGLSLYAFGIGLANAGLV. Over 336 to 347 the chain is Cytoplasmic; the sequence is RLTLFASDISKG. A helical membrane pass occupies residues 348-368; that stretch reads TVSAAMGMISMMIFTLGIELA. Topologically, residues 369 to 378 are periplasmic; the sequence is KVAYLWGDSR. A helical transmembrane segment spans residues 379 to 399; that stretch reads GFNLFNLMSGLLWLGLVMVFI. Topologically, residues 400 to 409 are cytoplasmic; it reads RRQPEAVATE.

It belongs to the major facilitator superfamily. MdfA family. Monomer.

The protein localises to the cell inner membrane. Its function is as follows. Efflux pump driven by the proton motive force. Confers resistance to a broad spectrum of chemically unrelated drugs. The polypeptide is Multidrug transporter MdfA (mdfA) (Yersinia pestis (strain D182038)).